The following is a 402-amino-acid chain: MKNLATVEDTLTSWPQVLLNTYGTPPVELVTGKGSTVTDADGNVYIDLLAGIAVNALGHAHPAIIEAVTTQLSQLGHVSNLFATRPVVEVAAELVQRFALDDATIASQTQVFFCNSGAEANEAAFKLARLTGRHRILAATNGFHGRTMGSLALTGQPDKRIPFAPLPSGVEFYPYGDLDYLTTLVESDPTDTAAIILEPIQGETGVIPAPEGFLTGVRELCDKHGLLFIVDEVQTGIGRTGDFFAHQHEGVTPDVVTMAKGLGGGLPIGACLATGEAAKLFGPGKHGTTFGGNPVSAAAARAVLSVIDEEFCADVARKGELFAEQLRGVAGVADVRGRGLMLGVVLDQPVAKQAVTAGFKHGLILNAPADNIIRLTPPLVITDDEIRDAVRALAAVLAELNA.

Residues 117 to 118 and phenylalanine 143 contribute to the pyridoxal 5'-phosphate site; that span reads GA. Residue arginine 146 participates in N(2)-acetyl-L-ornithine binding. 231–234 provides a ligand contact to pyridoxal 5'-phosphate; it reads DEVQ. At lysine 260 the chain carries N6-(pyridoxal phosphate)lysine. Threonine 288 serves as a coordination point for N(2)-acetyl-L-ornithine. A pyridoxal 5'-phosphate-binding site is contributed by threonine 289.

This sequence belongs to the class-III pyridoxal-phosphate-dependent aminotransferase family. ArgD subfamily. As to quaternary structure, homodimer. Pyridoxal 5'-phosphate serves as cofactor.

The protein resides in the cytoplasm. It catalyses the reaction N(2)-acetyl-L-ornithine + 2-oxoglutarate = N-acetyl-L-glutamate 5-semialdehyde + L-glutamate. It participates in amino-acid biosynthesis; L-arginine biosynthesis; N(2)-acetyl-L-ornithine from L-glutamate: step 4/4. The polypeptide is Acetylornithine aminotransferase (Corynebacterium efficiens (strain DSM 44549 / YS-314 / AJ 12310 / JCM 11189 / NBRC 100395)).